Reading from the N-terminus, the 438-residue chain is MNENAPTHKSSHKVKTHTPVSGYHIEDLRTYPTEKLLEIANKLKVENPQEFKRQDLMFEILKTQVTQGGYILFTGILEIMPDGYGFLRGFDGSFSDGHNDTYVSPSQIRRFALRNGDIVTGQVRSPKDQEKYYALLKIEAINYLPSDEIKNRPLFDNLTPLFPDEQIKLEYEPTKVTGRMLDLFSPVGKGQRALIVAPPRTGKTELMKELAQGITSNHPEVELIILLVDERPEEVTDMQRSVKGQVFSSTFDLPANNHIRIAELVLERAKRRVEMGKDVVVLLDSITRLARAYNAVTPSSGKVLSGGVDANALHRPKRFFGAARNIEEGGSLTIIATALIETGSRMDEVIFEEFKGTGNSEIVLARNIADRRIYPAFDILKSGTRKDNILLGKDRLTKVWVLRNVMQQMDDIEALSFVYSKMQQTKDNEEFLNLMNEK.

The region spanning 70–145 (YILFTGILEI…LKIEAINYLP (76 aa)) is the Rho RNA-BD domain. Residues 188–193 (GKGQRA), 200–205 (RTGKTE), and Arg231 contribute to the ATP site.

The protein belongs to the Rho family. As to quaternary structure, homohexamer. The homohexamer assembles into an open ring structure.

In terms of biological role, facilitates transcription termination by a mechanism that involves Rho binding to the nascent RNA, activation of Rho's RNA-dependent ATPase activity, and release of the mRNA from the DNA template. In Helicobacter pylori (strain J99 / ATCC 700824) (Campylobacter pylori J99), this protein is Transcription termination factor Rho.